Consider the following 93-residue polypeptide: Non-histone chromosomal protein 6A (93 aa).

Disordered stretches follow at residues Met-1–Arg-23 and Pro-69–Ala-93. A compositionally biased stretch (basic residues) spans Pro-7–Lys-16. The HMG box DNA-binding region spans Pro-21–Asn-89. Over residues Pro-69–Leu-87 the composition is skewed to basic and acidic residues.

Belongs to the NHP6 family. As to quaternary structure, weakly associates with the stable SPT16-POB3 heterodimer to form the FACT (yFACT or SNP) complex, which is associated with nucleosomes. Multiple molecules of NHP6 (NHP6A and/or NHP6B) are required to recruit the SPT16-POB3 heterodimer to DNA.

It is found in the nucleus. The protein localises to the chromosome. DNA-binding protein that induces severe bending of DNA. Required for DNA-binding by the FACT complex, a general chromatin factor that acts to reorganize nucleosomes. The FACT complex is involved in multiple processes that require DNA as a template such as mRNA elongation, DNA replication and DNA repair. Also augments the fidelity of transcription by RNA polymerase III independently of any role in the FACT complex. Required for transcriptional initiation fidelity of some but not all tRNA genes. Seems to be functionally redundant with NHP6B. This chain is Non-histone chromosomal protein 6A (NHP6A), found in Saccharomyces cerevisiae (strain ATCC 204508 / S288c) (Baker's yeast).